Reading from the N-terminus, the 444-residue chain is Trigger factor (444 aa).

A PPIase FKBP-type domain is found at 170–255; it reads NDIAVIDFVG…LKAIKQLEIT (86 aa).

It belongs to the FKBP-type PPIase family. Tig subfamily.

The protein resides in the cytoplasm. The catalysed reaction is [protein]-peptidylproline (omega=180) = [protein]-peptidylproline (omega=0). In terms of biological role, involved in protein export. Acts as a chaperone by maintaining the newly synthesized protein in an open conformation. Functions as a peptidyl-prolyl cis-trans isomerase. The polypeptide is Trigger factor (tig) (Mycoplasma pneumoniae (strain ATCC 29342 / M129 / Subtype 1) (Mycoplasmoides pneumoniae)).